The chain runs to 390 residues: GTPase Obg (390 aa).

Positions Met-1–Leu-159 constitute an Obg domain. Residues Asn-127–Gly-147 are disordered. Positions Arg-129 to Thr-145 are enriched in polar residues. Positions Ala-160 to Ile-333 constitute an OBG-type G domain. Residues Gly-166–Ser-173, Phe-191–Val-195, Asp-213–Gly-216, Asn-283–Asp-286, and Ser-314–Ala-316 each bind GTP. 2 residues coordinate Mg(2+): Ser-173 and Thr-193.

Belongs to the TRAFAC class OBG-HflX-like GTPase superfamily. OBG GTPase family. Monomer. The cofactor is Mg(2+).

It localises to the cytoplasm. An essential GTPase which binds GTP, GDP and possibly (p)ppGpp with moderate affinity, with high nucleotide exchange rates and a fairly low GTP hydrolysis rate. Plays a role in control of the cell cycle, stress response, ribosome biogenesis and in those bacteria that undergo differentiation, in morphogenesis control. The polypeptide is GTPase Obg (Escherichia fergusonii (strain ATCC 35469 / DSM 13698 / CCUG 18766 / IAM 14443 / JCM 21226 / LMG 7866 / NBRC 102419 / NCTC 12128 / CDC 0568-73)).